Consider the following 116-residue polypeptide: NADH-ubiquinone oxidoreductase chain 3 (116 aa).

Helical transmembrane passes span 3-23, 56-76, and 84-104; these read LVTT…TISF, FFLI…LLPL, and APTL…LGLI.

It belongs to the complex I subunit 3 family.

The protein localises to the mitochondrion membrane. It carries out the reaction a ubiquinone + NADH + 5 H(+)(in) = a ubiquinol + NAD(+) + 4 H(+)(out). Its function is as follows. Core subunit of the mitochondrial membrane respiratory chain NADH dehydrogenase (Complex I) that is believed to belong to the minimal assembly required for catalysis. Complex I functions in the transfer of electrons from NADH to the respiratory chain. The immediate electron acceptor for the enzyme is believed to be ubiquinone. The chain is NADH-ubiquinone oxidoreductase chain 3 (MT-ND3) from Oncorhynchus nerka (Sockeye salmon).